The following is a 481-amino-acid chain: 3-isopropylmalate dehydratase large subunit (481 aa).

3 residues coordinate [4Fe-4S] cluster: Cys-357, Cys-417, and Cys-420. Residues 429-441 (SPGQRCASTSNRN) show a composition bias toward polar residues. The interval 429–451 (SPGQRCASTSNRNFEGRQGKGGR) is disordered.

It belongs to the aconitase/IPM isomerase family. LeuC type 1 subfamily. As to quaternary structure, heterodimer of LeuC and LeuD. The cofactor is [4Fe-4S] cluster.

The enzyme catalyses (2R,3S)-3-isopropylmalate = (2S)-2-isopropylmalate. It participates in amino-acid biosynthesis; L-leucine biosynthesis; L-leucine from 3-methyl-2-oxobutanoate: step 2/4. Catalyzes the isomerization between 2-isopropylmalate and 3-isopropylmalate, via the formation of 2-isopropylmaleate. The polypeptide is 3-isopropylmalate dehydratase large subunit (Mycobacterium sp. (strain JLS)).